We begin with the raw amino-acid sequence, 248 residues long: PF03932 family protein CutC (248 aa).

It belongs to the CutC family. In terms of assembly, homodimer.

It is found in the cytoplasm. The protein is PF03932 family protein CutC of Escherichia coli (strain 55989 / EAEC).